Consider the following 431-residue polypeptide: 5-methylthioadenosine/S-adenosylhomocysteine deaminase (431 aa).

His66 and His68 together coordinate Zn(2+). Positions 95, 147, and 185 each coordinate substrate. Residue His212 participates in Zn(2+) binding. 2 residues coordinate substrate: Glu215 and Asp300. Asp300 contributes to the Zn(2+) binding site.

It belongs to the metallo-dependent hydrolases superfamily. MTA/SAH deaminase family. Zn(2+) serves as cofactor.

The enzyme catalyses S-adenosyl-L-homocysteine + H2O + H(+) = S-inosyl-L-homocysteine + NH4(+). It catalyses the reaction S-methyl-5'-thioadenosine + H2O + H(+) = S-methyl-5'-thioinosine + NH4(+). Catalyzes the deamination of 5-methylthioadenosine and S-adenosyl-L-homocysteine into 5-methylthioinosine and S-inosyl-L-homocysteine, respectively. Is also able to deaminate adenosine. In Desulfitobacterium hafniense (strain Y51), this protein is 5-methylthioadenosine/S-adenosylhomocysteine deaminase.